Reading from the N-terminus, the 430-residue chain is Endochitinase 46 (430 aa).

Positions methionine 1–alanine 22 are cleaved as a signal peptide. The propeptide occupies serine 23–arginine 35. Residues tyrosine 39–leucine 408 enclose the GH18 domain. Residues glycine 103–threonine 104 and glycine 130–threonine 133 contribute to the chitin site. Glutamate 172 functions as the Proton donor in the catalytic mechanism. Tyrosine 173 is a chitin binding site. An N-linked (GlcNAc...) asparagine glycan is attached at asparagine 219. Chitin is bound by residues methionine 238 to aspartate 241 and tryptophan 385.

It belongs to the glycosyl hydrolase 18 family. Chitinase class V subfamily.

The protein localises to the secreted. It carries out the reaction Random endo-hydrolysis of N-acetyl-beta-D-glucosaminide (1-&gt;4)-beta-linkages in chitin and chitodextrins.. Secreted chitinase involved in the degradation of chitin, a component of the cell walls of fungi and exoskeletal elements of some animals (including worms and arthropods). Plays a morphogenetic role during apical growth, cell division and differentiation (cell wall morphogenesis). Also acts as an antifungal agent. Involved in the degradation and further assimilation of phytopathogenic fungi, namely mycoparasitism, the major mechanism accounting for the antagonistic activity against phytopathogenic fungi displayed by Trichoderma. This chain is Endochitinase 46 (chit46), found in Trichoderma harzianum (Hypocrea lixii).